The following is a 287-amino-acid chain: Phosphatidylserine decarboxylase proenzyme (287 aa).

Catalysis depends on charge relay system; for autoendoproteolytic cleavage activity residues aspartate 90, histidine 147, and serine 252. Serine 252 functions as the Schiff-base intermediate with substrate; via pyruvic acid; for decarboxylase activity in the catalytic mechanism. Residue serine 252 is modified to Pyruvic acid (Ser); by autocatalysis.

The protein belongs to the phosphatidylserine decarboxylase family. PSD-B subfamily. Prokaryotic type I sub-subfamily. Heterodimer of a large membrane-associated beta subunit and a small pyruvoyl-containing alpha subunit. It depends on pyruvate as a cofactor. Post-translationally, is synthesized initially as an inactive proenzyme. Formation of the active enzyme involves a self-maturation process in which the active site pyruvoyl group is generated from an internal serine residue via an autocatalytic post-translational modification. Two non-identical subunits are generated from the proenzyme in this reaction, and the pyruvate is formed at the N-terminus of the alpha chain, which is derived from the carboxyl end of the proenzyme. The autoendoproteolytic cleavage occurs by a canonical serine protease mechanism, in which the side chain hydroxyl group of the serine supplies its oxygen atom to form the C-terminus of the beta chain, while the remainder of the serine residue undergoes an oxidative deamination to produce ammonia and the pyruvoyl prosthetic group on the alpha chain. During this reaction, the Ser that is part of the protease active site of the proenzyme becomes the pyruvoyl prosthetic group, which constitutes an essential element of the active site of the mature decarboxylase.

It is found in the cell membrane. The catalysed reaction is a 1,2-diacyl-sn-glycero-3-phospho-L-serine + H(+) = a 1,2-diacyl-sn-glycero-3-phosphoethanolamine + CO2. It functions in the pathway phospholipid metabolism; phosphatidylethanolamine biosynthesis; phosphatidylethanolamine from CDP-diacylglycerol: step 2/2. Its function is as follows. Catalyzes the formation of phosphatidylethanolamine (PtdEtn) from phosphatidylserine (PtdSer). The polypeptide is Phosphatidylserine decarboxylase proenzyme (Pseudomonas putida (strain ATCC 700007 / DSM 6899 / JCM 31910 / BCRC 17059 / LMG 24140 / F1)).